Here is a 183-residue protein sequence, read N- to C-terminus: Adenine phosphoribosyltransferase (183 aa).

It belongs to the purine/pyrimidine phosphoribosyltransferase family. Homodimer.

It localises to the cytoplasm. The catalysed reaction is AMP + diphosphate = 5-phospho-alpha-D-ribose 1-diphosphate + adenine. It participates in purine metabolism; AMP biosynthesis via salvage pathway; AMP from adenine: step 1/1. Functionally, catalyzes a salvage reaction resulting in the formation of AMP, that is energically less costly than de novo synthesis. This is Adenine phosphoribosyltransferase from Shewanella halifaxensis (strain HAW-EB4).